We begin with the raw amino-acid sequence, 106 residues long: Urease subunit beta (106 aa).

The protein belongs to the urease beta subunit family. As to quaternary structure, heterotrimer of UreA (gamma), UreB (beta) and UreC (alpha) subunits. Three heterotrimers associate to form the active enzyme.

It localises to the cytoplasm. The catalysed reaction is urea + 2 H2O + H(+) = hydrogencarbonate + 2 NH4(+). The protein operates within nitrogen metabolism; urea degradation; CO(2) and NH(3) from urea (urease route): step 1/1. This is Urease subunit beta from Prochlorococcus marinus (strain MIT 9301).